We begin with the raw amino-acid sequence, 500 residues long: ADP,ATP carrier protein 5 (500 aa).

Helical transmembrane passes span 21–41 (IYNY…CILF), 62–82 (IAGF…VIIY), 94–114 (IFYY…FVIY), 149–169 (YIVY…LLFW), 184–204 (FYTL…FLMM), 224–244 (ITLV…CCLL), 287–307 (LWLL…VEAV), 328–348 (LYIL…NNVM), 357–377 (AVIS…LIVF), 381–401 (ILSL…VSIG), and 469–489 (SISP…IYAV).

The protein belongs to the ADP/ATP translocase tlc family.

It is found in the cell membrane. In terms of biological role, provides the rickettsial cell with host ATP in exchange for rickettsial ADP. This is an obligate exchange system. This energy acquiring activity is an important component of rickettsial parasitism. This Rickettsia bellii (strain RML369-C) protein is ADP,ATP carrier protein 5 (tlcE).